The following is a 306-amino-acid chain: Anamorsin (306 aa).

Positions 6 to 172 (IAPGQRVAVI…KPNFEVGSSS (167 aa)) are N-terminal SAM-like domain. Positions 173 to 224 (QLKLSFAKKTSPSGKPSVDPATAKLWTLSASDMNDEEMDLLDSDELLDSEDL) are linker. C237, C246, C249, and C251 together coordinate [2Fe-2S] cluster. The interval 237–251 (CKEKGKKKACKNCTC) is fe-S binding site A. The [4Fe-4S] cluster site is built by C270, C273, C281, and C284. 2 consecutive short sequence motifs (cx2C motif) follow at residues 270 to 273 (CGNC) and 281 to 284 (CASC). The fe-S binding site B stretch occupies residues 270–284 (CGNCYLGDAFRCASC).

This sequence belongs to the anamorsin family. In terms of assembly, monomer. Interacts with NDOR1. Interacts with CHCHD4. [2Fe-2S] cluster serves as cofactor. Requires [4Fe-4S] cluster as cofactor.

The protein resides in the cytoplasm. The protein localises to the nucleus. It localises to the mitochondrion intermembrane space. Component of the cytosolic iron-sulfur (Fe-S) protein assembly (CIA) machinery required for the maturation of extramitochondrial Fe-S proteins. Part of an electron transfer chain functioning in an early step of cytosolic Fe-S biogenesis, facilitating the de novo assembly of a [4Fe-4S] cluster on the scaffold complex NUBP1-NUBP2. Electrons are transferred to CIAPIN1 from NADPH via the FAD- and FMN-containing protein NDOR1. NDOR1-CIAPIN1 are also required for the assembly of the diferric tyrosyl radical cofactor of ribonucleotide reductase (RNR), probably by providing electrons for reduction during radical cofactor maturation in the catalytic small subunit. Has anti-apoptotic effects in the cell. Involved in negative control of cell death upon cytokine withdrawal. Promotes development of hematopoietic cells. This chain is Anamorsin, found in Gallus gallus (Chicken).